The following is a 216-amino-acid chain: Adenylate kinase (216 aa).

10 to 15 contacts ATP; that stretch reads GAGKGT. The NMP stretch occupies residues 30 to 59; the sequence is STGDMLRAAVKAGTKLGQQVQGIMAAGKLV. Residues threonine 31, arginine 36, 57–59, 85–88, and glutamine 92 each bind AMP; these read KLV and GFPR. The LID stretch occupies residues 122-159; sequence GRRVHMPSGRIYHLKFNPPKITDKDDMTGESLTLRKDD. Residues arginine 123 and 132–133 contribute to the ATP site; that span reads IY. Residues arginine 156 and arginine 167 each contribute to the AMP site. Residue arginine 200 coordinates ATP.

This sequence belongs to the adenylate kinase family. As to quaternary structure, monomer.

The protein localises to the cytoplasm. It carries out the reaction AMP + ATP = 2 ADP. It functions in the pathway purine metabolism; AMP biosynthesis via salvage pathway; AMP from ADP: step 1/1. Functionally, catalyzes the reversible transfer of the terminal phosphate group between ATP and AMP. Plays an important role in cellular energy homeostasis and in adenine nucleotide metabolism. The sequence is that of Adenylate kinase from Hamiltonella defensa subsp. Acyrthosiphon pisum (strain 5AT).